A 385-amino-acid chain; its full sequence is MSELALIQKAIEESQQKMTQLFDAQKAEIESTGQVSKQLQSDLMKVQEELTKSGTRLFDLEQKLASGAENPGEKKSFSERAAEELIKSWDGKQGTFGAKTFNKSLGSDADSAGSLIQPMQIPGIIMPGLRRLTIRDLLAQGRTSSNALEYVREEVFTNNADVVAEKALKPESDITFSKQTANVKTIAHWVQASRQVMDDAPMLQSYINNRLMYGLALKEEGQLLNGDGTGDNLEGLNKVATAYDTSLNATGDTRADIIAHAIYQVTESEFSASGIVLNPRDWHNIALLKDNEGRYIFGGPQAFTSNIMWGLPVVPTKAQAAGTFTVGGFDMASQVWDRMDATVEVSREDRDNFVKNMLTILCEERLALAHYRPTAIIKGTFSSGS.

Residues 1-57 (MSELALIQKAIEESQQKMTQLFDAQKAEIESTGQVSKQLQSDLMKVQEELTKSGTRL) are a coiled coil. An Isoaspartyl lysine isopeptide (Lys-Asn) (interchain with N-356) cross-link involves residue Lys169. Residue Asn356 forms an Isoaspartyl lysine isopeptide (Asn-Lys) (interchain with K-169) linkage.

The protein belongs to the HK97 phage major capsid protein family. As to quaternary structure, homopentamer and homohexamer; isoaspartyl lysine isopeptide-linked. Interacts with the portal protein. Post-translationally, the scaffolding domain delta is cleaved by the viral protease and lost after assembly. In terms of processing, the major capsid proteins are covalently cross-linked.

The protein resides in the virion. In terms of biological role, assembles to form an icosahedral capsid of 66 nm, with a T=7 laevo symmetry. Responsible for its self-assembly into a procapsid. The phage does not need to encode a separate scaffolfing protein because its capsid protein contains the delta domain that carries that function. The chain is Major capsid protein (5) from Escherichia coli (Bacteriophage HK97).